The sequence spans 227 residues: PKHD-type hydroxylase M446_1130 (227 aa).

The region spanning Gln78 to Ser178 is the Fe2OG dioxygenase domain. Fe cation is bound by residues His96, Asp98, and His159. Arg169 lines the 2-oxoglutarate pocket.

It depends on Fe(2+) as a cofactor. L-ascorbate serves as cofactor.

This chain is PKHD-type hydroxylase M446_1130, found in Methylobacterium sp. (strain 4-46).